Here is a 160-residue protein sequence, read N- to C-terminus: uncharacterized protein (160 aa).

The Cupin type-2 domain occupies 37–110; that stretch reads LMSLKPKEDI…TDYLKLYTIY (74 aa).

The protein resides in the virion. This is an uncharacterized protein from Acanthamoeba polyphaga mimivirus (APMV).